We begin with the raw amino-acid sequence, 189 residues long: Alanine and glycine-rich protein (189 aa).

The segment covering 127–160 has biased composition (gly residues); it reads AGAGGGSGGGGGGGSGSGGSGGSGGSGGSGGNDG. Residues 127–170 form a disordered region; that stretch reads AGAGGGSGGGGGGGSGSGGSGGSGGSGGSGGNDGNDGNDGSSSR.

As to expression, component of the organic matrix of calcified shell layers like nacre and prisms.

It localises to the secreted. This Mytilus californianus (California mussel) protein is Alanine and glycine-rich protein.